Here is a 127-residue protein sequence, read N- to C-terminus: Large ribosomal subunit protein eL8 (127 aa).

Belongs to the eukaryotic ribosomal protein eL8 family. In terms of assembly, part of the 50S ribosomal subunit. Probably part of the RNase P complex.

The protein resides in the cytoplasm. Its function is as follows. Multifunctional RNA-binding protein that recognizes the K-turn motif in ribosomal RNA, the RNA component of RNase P, box H/ACA, box C/D and box C'/D' sRNAs. The chain is Large ribosomal subunit protein eL8 from Desulfurococcus amylolyticus (strain DSM 18924 / JCM 16383 / VKM B-2413 / 1221n) (Desulfurococcus kamchatkensis).